The following is a 273-amino-acid chain: Octanoyltransferase (273 aa).

Residues 35–254 (DRVPDTCLLL…HLRDILENAE (220 aa)) enclose the BPL/LPL catalytic domain. Residues 73-80 (RGGKITWH), 184-186 (AIG), and 197-199 (GFA) contribute to the substrate site. The Acyl-thioester intermediate role is filled by C215.

The protein belongs to the LipB family.

The protein localises to the cytoplasm. The catalysed reaction is octanoyl-[ACP] + L-lysyl-[protein] = N(6)-octanoyl-L-lysyl-[protein] + holo-[ACP] + H(+). It functions in the pathway protein modification; protein lipoylation via endogenous pathway; protein N(6)-(lipoyl)lysine from octanoyl-[acyl-carrier-protein]: step 1/2. Functionally, catalyzes the transfer of endogenously produced octanoic acid from octanoyl-acyl-carrier-protein onto the lipoyl domains of lipoate-dependent enzymes. Lipoyl-ACP can also act as a substrate although octanoyl-ACP is likely to be the physiological substrate. In Streptomyces griseus subsp. griseus (strain JCM 4626 / CBS 651.72 / NBRC 13350 / KCC S-0626 / ISP 5235), this protein is Octanoyltransferase.